We begin with the raw amino-acid sequence, 393 residues long: Putative F-box/kelch-repeat protein At1g32430 (393 aa).

Residues 1–47 (MANKEKLPWDLEEEILSRVPPTSLDRFKTVCKRWNALFNDKTFINNH) enclose the F-box domain. 2 Kelch repeats span residues 151–199 (YMKD…NLSV) and 308–357 (WIYV…QVQF).

The protein is Putative F-box/kelch-repeat protein At1g32430 of Arabidopsis thaliana (Mouse-ear cress).